A 674-amino-acid chain; its full sequence is Tripartite terminase subunit 3 (674 aa).

The Walker A motif motif lies at 212-219 (VPRRHGKT). Positions 305 to 310 (LLLVDE) match the Walker B motif motif. Residue Glu-310 is the For ATPase activity of the active site. Catalysis depends on for nuclease activity residues Asp-463 and Glu-534. The tract at residues 580–600 (GRDKALAVEQFISRFNSGYIK) is required for interaction with UL56 and DNA packaging. The active-site For nuclease activity is the Asp-651.

This sequence belongs to the herpesviridae TRM3 protein family. In terms of assembly, interacts with the terminase subunits TRM1 and TRM2. Interacts with portal protein.

It localises to the host nucleus. In terms of biological role, component of the molecular motor that translocates viral genomic DNA in empty capsid during DNA packaging. Forms a tripartite terminase complex together with TRM1 and TRM2 in the host cytoplasm. Once the complex reaches the host nucleus, it interacts with the capsid portal vertex. This portal forms a ring in which genomic DNA is translocated into the capsid. TRM3 carries an RNase H-like nuclease activity that plays an important role for the cleavage of concatemeric viral DNA into unit length genomes. In Homo sapiens (Human), this protein is Tripartite terminase subunit 3.